The primary structure comprises 856 residues: MSMGGGSNHEFGQWLDQQLVPLATSSGSLMVELLHGNLDIWVKEAKHLPNMICYRNKLVGGISFSELGRRIRKVDGEKSSKFTSDPYVTVSISGAVIGRTFVISNSENPVWMQHFDVPVAHSAAEVHFVVKDNDPIGSKIIGVVGIPTKQLCSGNRIEGLFPILNSSGKPCRKGAMLSLSIQYTPMERMRLYQKGVGSGVECVGVPGTYFPLRKGGRVTLYQDAHVDDGTLPSVHLDGGIQYRHGKCWEDMADAIRRARRLIYITGWSVFHPVRLVRRNNDPTEGTLGELLKVKSQEGVRVLVLVWDDPTSMSFPGFSTKGLMNTSDEETRRFFKHSSVQVLLCPRYGGKGHSFIKKSEVETIYTHHQKTMIVDAEAAQNRRKIVAFVGGLDLCNGRFDTPKHSLFGTLKTLHKDDFHNPNFVTTEDVGPREPWHDLHSKIDGPAAYDVLANFEERWMASKPRGIGKGRTSFDDSLLRINRIPDIMGLSEASSANDNDPESWHVQVFRSIDSTSVKGFPKDPEEATGRNLLCGKNILIDMSIHAAYVKAIRSAQHFIYIENQYFLGSSFNWDSNKDLGANNLIPMEIALKIANKIRARENFAAYIVIPMWPEGAPTSKPIQRILYWQHKTMQMMYQTIYKALLEVGLDGQLEPQDFLNFFCLGNREVGTREVPDGTVNVYNCPRKPPQPNAAQVQALKSRRFMIYVHSKGMVVDDEFVLIGSANINQRSLEGTRDTEIAMGGYQPHHSWAKKGSRPRGQIFGYRMSLWAEHLGFLEQEFEEPENMECVRRVRQLSELNWGQYAAEEVTEMSGHLLKYPVQVDKTGKVSSLPGCETFPDLGGKIIGSFLTLQENLTI.

One can recognise a C2 domain in the interval 21-161; it reads PLATSSGSLM…CSGNRIEGLF (141 aa). D223 contacts Ca(2+). In terms of domain architecture, PLD phosphodiesterase 1 spans 362–397; sequence TIYTHHQKTMIVDAEAAQNRRKIVAFVGGLDLCNGR. Residues H367, K369, and D374 contribute to the active site. An a 1,2-diacyl-sn-glycero-3-phosphate-binding site is contributed by H367. Residues H403 and H435 each contribute to the Ca(2+) site. Q562 and H707 together coordinate a 1,2-diacyl-sn-glycero-3-phosphate. The region spanning 702-729 is the PLD phosphodiesterase 2 domain; that stretch reads FMIYVHSKGMVVDDEFVLIGSANINQRS. Residues H707, K709, and D714 contribute to the active site. E770 lines the Ca(2+) pocket.

Belongs to the phospholipase D family. C2-PLD subfamily. Ca(2+) is required as a cofactor. In terms of tissue distribution, highly expressed in roots and flowers, moderately in stems, leaves and seedlings and low in siliques. Not detected in seeds.

Its subcellular location is the cytoplasm. It is found in the membrane. It carries out the reaction a 1,2-diacyl-sn-glycero-3-phosphocholine + H2O = a 1,2-diacyl-sn-glycero-3-phosphate + choline + H(+). Its activity is regulated as follows. Inhibited by neomycin. Functionally, hydrolyzes glycerol-phospholipids at the terminal phosphodiesteric bond to generate phosphatidic acids (PA). Plays an important role in various cellular processes, including phytohormone action, vesicular trafficking, secretion, cytoskeletal arrangement, meiosis, tumor promotion, pathogenesis, membrane deterioration and senescence. Can use phosphatidylserine but prefers ethanolamine-containing lipids as substrates. Can use phosphatidylcholine (PC) as substrates in the presence of phosphatidylethanolamine (PE) and PIP2. Involved in membrane lipid modulation under aluminum (Al) stress and negatively modulate plant tolerance to Al. In Arabidopsis thaliana (Mouse-ear cress), this protein is Phospholipase D gamma 2.